The primary structure comprises 459 residues: Glycosyl hydrolase family 109 protein 1 (459 aa).

Residues methionine 1–alanine 31 constitute a signal peptide (tat-type signal). Residues glutamate 64–arginine 65, aspartate 86, tryptophan 135–histidine 138, glutamate 155–valine 156, and asparagine 184 each bind NAD(+). Substrate-binding positions include tyrosine 213, arginine 232, tyrosine 244–histidine 247, and tyrosine 326. Tyrosine 244 provides a ligand contact to NAD(+).

It belongs to the Gfo/Idh/MocA family. Glycosyl hydrolase 109 subfamily. NAD(+) is required as a cofactor. Post-translationally, predicted to be exported by the Tat system. The position of the signal peptide cleavage has not been experimentally proven.

Functionally, glycosidase. The chain is Glycosyl hydrolase family 109 protein 1 from Shewanella sp. (strain ANA-3).